The primary structure comprises 73 residues: Small ribosomal subunit protein bS18B (73 aa).

It belongs to the bacterial ribosomal protein bS18 family. In terms of assembly, part of the 30S ribosomal subunit. Forms a tight heterodimer with protein bS6.

In terms of biological role, binds as a heterodimer with protein bS6 to the central domain of the 16S rRNA, where it helps stabilize the platform of the 30S subunit. This is Small ribosomal subunit protein bS18B from Frankia alni (strain DSM 45986 / CECT 9034 / ACN14a).